We begin with the raw amino-acid sequence, 668 residues long: UvrABC system protein B (668 aa).

A Helicase ATP-binding domain is found at 31 to 188 (HGIEAGEKAQ…RKLVNIQFER (158 aa)). ATP is bound at residue 44 to 51 (GATGTGKT). A Beta-hairpin motif is present at residues 97 to 120 (YYDYYQPEAYVPSSDTYIEKDSSI). The 167-residue stretch at 435–601 (QMDDLVGEIN…TIIKPIRDLI (167 aa)) folds into the Helicase C-terminal domain. Positions 630-665 (EKLIARLEDEMRAAAKKLDFEQAASLRDTIMDMKTE) constitute a UVR domain.

It belongs to the UvrB family. Forms a heterotetramer with UvrA during the search for lesions. Interacts with UvrC in an incision complex.

The protein resides in the cytoplasm. In terms of biological role, the UvrABC repair system catalyzes the recognition and processing of DNA lesions. A damage recognition complex composed of 2 UvrA and 2 UvrB subunits scans DNA for abnormalities. Upon binding of the UvrA(2)B(2) complex to a putative damaged site, the DNA wraps around one UvrB monomer. DNA wrap is dependent on ATP binding by UvrB and probably causes local melting of the DNA helix, facilitating insertion of UvrB beta-hairpin between the DNA strands. Then UvrB probes one DNA strand for the presence of a lesion. If a lesion is found the UvrA subunits dissociate and the UvrB-DNA preincision complex is formed. This complex is subsequently bound by UvrC and the second UvrB is released. If no lesion is found, the DNA wraps around the other UvrB subunit that will check the other stand for damage. The sequence is that of UvrABC system protein B from Levilactobacillus brevis (strain ATCC 367 / BCRC 12310 / CIP 105137 / JCM 1170 / LMG 11437 / NCIMB 947 / NCTC 947) (Lactobacillus brevis).